The primary structure comprises 183 residues: Glutathione-regulated potassium-efflux system ancillary protein KefG (183 aa).

This sequence belongs to the NAD(P)H dehydrogenase (quinone) family. KefG subfamily. As to quaternary structure, interacts with KefB.

Its subcellular location is the cell inner membrane. The enzyme catalyses a quinone + NADH + H(+) = a quinol + NAD(+). It catalyses the reaction a quinone + NADPH + H(+) = a quinol + NADP(+). Functionally, regulatory subunit of a potassium efflux system that confers protection against electrophiles. Required for full activity of KefB. The polypeptide is Glutathione-regulated potassium-efflux system ancillary protein KefG (Enterobacter sp. (strain 638)).